The sequence spans 271 residues: MDLCNFYCCYLLKSNRTQSSGAVYIGSTPDPPRRLRQHNGEIVGGASKTKHGRPWSISCLVYGFPNKVSALKFEWNWQNLGISRYTKDCDFRSKKQKTIMYCLKGLKHLVDSDTWRRWPLNITFLNKTAFSKWNQLGKTYGNINVYFDEEWLNGFHEKVIQKTYDHKLCLRKTISEPVKCNLCYECIESDELRANCPFTDCNSINHLTCLASSFLTEECQVLPIEGMCTKCKRVLRWREFLSTVFTTSLETDERDFESENRIEIIDLELEK.

A GIY-YIG domain is found at 5–87 (NFYCCYLLKS…QNLGISRYTK (83 aa)). The segment at 180–231 (CNLCYECIESDELRANCPFTDCNSINHLTCLASSFLTEECQVLPIEGMCTKC) adopts an SLX1-type zinc-finger fold.

This sequence belongs to the SLX1 family. In terms of assembly, forms a heterodimer with slx4. Mg(2+) is required as a cofactor. The cofactor is Mn(2+).

It is found in the nucleus. The protein resides in the nucleolus. Its function is as follows. Catalytic subunit of the slx1-slx4 structure-specific endonuclease that resolves DNA secondary structures generated during DNA repair and recombination. Has endonuclease activity towards branched DNA substrates, introducing single-strand cuts in duplex DNA close to junctions with ss-DNA. Has a preference for stem-loop (SL) and splayed arm Y structures. Introduces a single-strand cut in duplex DNA on the 3' side of a double-strand/single-strand junction with respect to the single-strand moving 3' to 5' away from the junction. Plays a critical role in maintaining the integrity of the ribosomal DNA (rDNA) loci, where it has a role in re-starting stalled replication forks. The complex initiates homologous recombination (HR) events, used to maintain rDNA copy number, in the rDNA repeats that are processed by a mechanism that requires rad22, but not rhp51. It is also required for suppression of methyl methanesulfonate (MMS) and UV-C irradiation hypersensitivity of the structural maintenance of chromosome (SMC) protein mutant, smc6-74, by overexpression of brc1. Has Holliday junction resolvase activity in vitro. In Schizosaccharomyces pombe (strain 972 / ATCC 24843) (Fission yeast), this protein is Structure-specific endonuclease subunit slx1.